The chain runs to 256 residues: MDALQALVLGALQGITEWLPVSSEGQTMLAMISWLGMRPTDALSCSIFLHTGTMLAVLVRFRSRLLGMLNTESKLMRTVIVATLFTGITGVPLYMLFRDRFTGGEQATLLIGSLLIATGLMLRLRSSSTKDMEEISTKDMVLLGLAQGFSILPGVSRSGTTLTVLLMRGVKQDDALMVSFIISVPAVLGAIALDCLAGSPLSIRSLPGAVMLASSFITGYATMDVLMRFSRNVSFSWFCITMGMITLALTALPEVQ.

7 helical membrane-spanning segments follow: residues Pro-39–Val-59, Arg-77–Phe-97, Phe-101–Met-121, Ile-135–Val-155, Leu-176–Leu-196, Leu-206–Leu-226, and Val-233–Pro-253.

The protein belongs to the UppP family.

The protein localises to the cell membrane. It catalyses the reaction di-trans,octa-cis-undecaprenyl diphosphate + H2O = di-trans,octa-cis-undecaprenyl phosphate + phosphate + H(+). Its function is as follows. Catalyzes the dephosphorylation of undecaprenyl diphosphate (UPP). This is Undecaprenyl-diphosphatase from Methanothrix thermoacetophila (strain DSM 6194 / JCM 14653 / NBRC 101360 / PT) (Methanosaeta thermophila).